Consider the following 367-residue polypeptide: Putative F-box protein At3g21120 (367 aa).

The F-box domain maps to 1-43 (MHLPEDLVLEILSKVPAVSLARFRSTCRRWNALVVDGSFAKKH).

In Arabidopsis thaliana (Mouse-ear cress), this protein is Putative F-box protein At3g21120.